The chain runs to 585 residues: Arginine--tRNA ligase (585 aa).

Positions alanine 131 to histidine 141 match the 'HIGH' region motif.

It belongs to the class-I aminoacyl-tRNA synthetase family. In terms of assembly, monomer.

The protein localises to the cytoplasm. The catalysed reaction is tRNA(Arg) + L-arginine + ATP = L-arginyl-tRNA(Arg) + AMP + diphosphate. The sequence is that of Arginine--tRNA ligase from Bartonella quintana (strain Toulouse) (Rochalimaea quintana).